A 424-amino-acid polypeptide reads, in one-letter code: Dapdiamide A synthase (424 aa).

The 199-residue stretch at 120–318 (QEQLALKGVA…QISKLAQAVL (199 aa)) folds into the ATP-grasp domain. 147 to 209 (AGHAHWPVVL…QEFLAGEEFV (63 aa)) contacts ATP. Mg(2+) contacts are provided by glutamate 275 and glutamate 287.

It depends on Mg(2+) as a cofactor. Mn(2+) serves as cofactor.

The catalysed reaction is 3-[[[(2R,3R)-3-carboxyoxiran-2-yl]carbonyl]amino]-L-alanine + L-valine + ATP = dapdiamide E + ADP + phosphate + H(+). It carries out the reaction N(3)-fumaramoyl-(S)-2,3-diaminopropanoate + L-valine + ATP = dapdiamide A + ADP + phosphate + H(+). It catalyses the reaction N(3)-fumaramoyl-(S)-2,3-diaminopropanoate + L-isoleucine + ATP = dapdiamide B + ADP + phosphate + H(+). The enzyme catalyses N(3)-fumaramoyl-(S)-2,3-diaminopropanoate + L-leucine + ATP = dapdiamide C + ADP + phosphate + H(+). It functions in the pathway antibiotic biosynthesis. Functionally, involved in dapdiamide antibiotics biosynthesis. Ligates N-beta-fumaramoyl-DAP and valine, isoleucine or leucine to form dapdiamides A, B or C, respectively. Also ligates N-beta-epoxysuccinamoyl-DAP and valine to form dapdiamide E. This is Dapdiamide A synthase from Enterobacter agglomerans (Erwinia herbicola).